Here is an 829-residue protein sequence, read N- to C-terminus: Periplasmic nitrate reductase (829 aa).

The segment at residues 1–36 (MARRDFIKQTAAAAAATVAGVPLTGYTQNIVTESEA) is a signal peptide (tat-type signal). The 57-residue stretch at 39–95 (LKWSKAPCRFCGTGCGVNVAVKDNQVVATHGDFNAEVNKGLNCVKGYFLSKIMYGSD) folds into the 4Fe-4S Mo/W bis-MGD-type domain. Cys-46, Cys-49, Cys-53, and Cys-81 together coordinate [4Fe-4S] cluster. Mo-bis(molybdopterin guanine dinucleotide) is bound by residues Lys-83, Gln-150, Asn-175, Cys-179, 212–219 (WGSNMAEM), 243–247 (STFEH), 262–264 (QSD), Met-373, Gln-377, Asn-483, 509–510 (SD), Lys-532, Asp-559, and 719–728 (TGRVLEHWHS). Trp-795 is a binding site for substrate. Mo-bis(molybdopterin guanine dinucleotide) is bound by residues Asn-803 and Lys-820.

This sequence belongs to the prokaryotic molybdopterin-containing oxidoreductase family. NasA/NapA/NarB subfamily. Component of the periplasmic nitrate reductase NapAB complex composed of NapA and NapB. Requires [4Fe-4S] cluster as cofactor. Mo-bis(molybdopterin guanine dinucleotide) serves as cofactor. Post-translationally, predicted to be exported by the Tat system. The position of the signal peptide cleavage has not been experimentally proven.

It localises to the periplasm. It catalyses the reaction 2 Fe(II)-[cytochrome] + nitrate + 2 H(+) = 2 Fe(III)-[cytochrome] + nitrite + H2O. Functionally, catalytic subunit of the periplasmic nitrate reductase complex NapAB. Receives electrons from NapB and catalyzes the reduction of nitrate to nitrite. The chain is Periplasmic nitrate reductase from Bordetella bronchiseptica (strain ATCC BAA-588 / NCTC 13252 / RB50) (Alcaligenes bronchisepticus).